The following is a 502-amino-acid chain: ATP synthase subunit alpha (502 aa).

Positions 117–139 (GMGPVLTSKTRPIESPAPGVMDR) are disordered. Residue 169-176 (GDRQTGKT) coordinates ATP.

It belongs to the ATPase alpha/beta chains family. In terms of assembly, F-type ATPases have 2 components, CF(1) - the catalytic core - and CF(0) - the membrane proton channel. CF(1) has five subunits: alpha(3), beta(3), gamma(1), delta(1), epsilon(1). CF(0) has three main subunits: a(1), b(2) and c(9-12). The alpha and beta chains form an alternating ring which encloses part of the gamma chain. CF(1) is attached to CF(0) by a central stalk formed by the gamma and epsilon chains, while a peripheral stalk is formed by the delta and b chains.

It is found in the cell membrane. The enzyme catalyses ATP + H2O + 4 H(+)(in) = ADP + phosphate + 5 H(+)(out). In terms of biological role, produces ATP from ADP in the presence of a proton gradient across the membrane. The alpha chain is a regulatory subunit. The polypeptide is ATP synthase subunit alpha (Bacillus licheniformis (strain ATCC 14580 / DSM 13 / JCM 2505 / CCUG 7422 / NBRC 12200 / NCIMB 9375 / NCTC 10341 / NRRL NRS-1264 / Gibson 46)).